The following is a 348-amino-acid chain: Holliday junction branch migration complex subunit RuvB (348 aa).

The disordered stretch occupies residues 1-20; the sequence is MKPPARMVSPERRSDDVGDT. Positions 1–183 are large ATPase domain (RuvB-L); sequence MKPPARMVSP…FGIPIRLNFY (183 aa). Residues leucine 22, arginine 23, glycine 64, lysine 67, threonine 68, threonine 69, 130-132, arginine 173, tyrosine 183, and arginine 220 each bind ATP; that span reads EDF. Residue threonine 68 participates in Mg(2+) binding. The tract at residues 184–254 is small ATPAse domain (RuvB-S); sequence TVEELEGIVT…IADHALSALE (71 aa). Residues 257-348 form a head domain (RuvB-H) region; that stretch reads AAGLDAMDRR…QIGLFGNDDD (92 aa). Residues arginine 293, arginine 312, and arginine 317 each contribute to the DNA site.

Belongs to the RuvB family. Homohexamer. Forms an RuvA(8)-RuvB(12)-Holliday junction (HJ) complex. HJ DNA is sandwiched between 2 RuvA tetramers; dsDNA enters through RuvA and exits via RuvB. An RuvB hexamer assembles on each DNA strand where it exits the tetramer. Each RuvB hexamer is contacted by two RuvA subunits (via domain III) on 2 adjacent RuvB subunits; this complex drives branch migration. In the full resolvosome a probable DNA-RuvA(4)-RuvB(12)-RuvC(2) complex forms which resolves the HJ.

It is found in the cytoplasm. It catalyses the reaction ATP + H2O = ADP + phosphate + H(+). Its function is as follows. The RuvA-RuvB-RuvC complex processes Holliday junction (HJ) DNA during genetic recombination and DNA repair, while the RuvA-RuvB complex plays an important role in the rescue of blocked DNA replication forks via replication fork reversal (RFR). RuvA specifically binds to HJ cruciform DNA, conferring on it an open structure. The RuvB hexamer acts as an ATP-dependent pump, pulling dsDNA into and through the RuvAB complex. RuvB forms 2 homohexamers on either side of HJ DNA bound by 1 or 2 RuvA tetramers; 4 subunits per hexamer contact DNA at a time. Coordinated motions by a converter formed by DNA-disengaged RuvB subunits stimulates ATP hydrolysis and nucleotide exchange. Immobilization of the converter enables RuvB to convert the ATP-contained energy into a lever motion, pulling 2 nucleotides of DNA out of the RuvA tetramer per ATP hydrolyzed, thus driving DNA branch migration. The RuvB motors rotate together with the DNA substrate, which together with the progressing nucleotide cycle form the mechanistic basis for DNA recombination by continuous HJ branch migration. Branch migration allows RuvC to scan DNA until it finds its consensus sequence, where it cleaves and resolves cruciform DNA. This Bradyrhizobium sp. (strain ORS 278) protein is Holliday junction branch migration complex subunit RuvB.